Reading from the N-terminus, the 321-residue chain is DNA repair and recombination protein RadA (321 aa).

111-118 provides a ligand contact to ATP; sequence GEFGSGKT.

This sequence belongs to the eukaryotic RecA-like protein family.

In terms of biological role, involved in DNA repair and in homologous recombination. Binds and assemble on single-stranded DNA to form a nucleoprotein filament. Hydrolyzes ATP in a ssDNA-dependent manner and promotes DNA strand exchange between homologous DNA molecules. This chain is DNA repair and recombination protein RadA, found in Sulfolobus acidocaldarius (strain ATCC 33909 / DSM 639 / JCM 8929 / NBRC 15157 / NCIMB 11770).